Reading from the N-terminus, the 191-residue chain is FMN reductase (NADH) RutF (191 aa).

It belongs to the non-flavoprotein flavin reductase family. RutF subfamily.

It catalyses the reaction FMNH2 + NAD(+) = FMN + NADH + 2 H(+). In terms of biological role, catalyzes the reduction of FMN to FMNH2 which is used to reduce pyrimidine by RutA via the Rut pathway. The polypeptide is FMN reductase (NADH) RutF (Escherichia coli O1:K1 / APEC).